Reading from the N-terminus, the 308-residue chain is Putative integrase/recombinase y4qK (308 aa).

Positions 15–97 (LVMTPLRQRM…ALRFFFSVTL (83 aa)) constitute a Core-binding (CB) domain. The Tyr recombinase domain occupies 115 to 288 (KLPIILSPDE…ATNKVCATSS (174 aa)). Active-site residues include Arg150, Lys175, His240, Arg243, and His266. Residue Tyr275 is the O-(3'-phospho-DNA)-tyrosine intermediate of the active site.

Belongs to the 'phage' integrase family.

In terms of biological role, may function as an integrase. The sequence is that of Putative integrase/recombinase y4qK from Sinorhizobium fredii (strain NBRC 101917 / NGR234).